The following is an 89-amino-acid chain: Protein FAM25A (89 aa).

It belongs to the FAM25 family.

The chain is Protein FAM25A from Mus musculus (Mouse).